The sequence spans 207 residues: MSEHQTPPEEDLTVANGDSAEAVSEPDVTVASGQEAAELAAQLALVAADRDRLKTELDEQNSAYLRLAADFENFRRRTLKEREELELQSKRTTITELLPVIDNFDRARAQIKPQGEEAEAIHKSYQGLYKQLVDCLKRIGVSPMRAEGQPFDPSLHDAVLREETTEHPDGIVLEELQRGYLLGDLVLRHALVKVSIAAEENSAAVTE.

A disordered region spans residues 1-31; it reads MSEHQTPPEEDLTVANGDSAEAVSEPDVTVA.

This sequence belongs to the GrpE family. Homodimer.

The protein resides in the cytoplasm. Functionally, participates actively in the response to hyperosmotic and heat shock by preventing the aggregation of stress-denatured proteins, in association with DnaK and GrpE. It is the nucleotide exchange factor for DnaK and may function as a thermosensor. Unfolded proteins bind initially to DnaJ; upon interaction with the DnaJ-bound protein, DnaK hydrolyzes its bound ATP, resulting in the formation of a stable complex. GrpE releases ADP from DnaK; ATP binding to DnaK triggers the release of the substrate protein, thus completing the reaction cycle. Several rounds of ATP-dependent interactions between DnaJ, DnaK and GrpE are required for fully efficient folding. The polypeptide is Protein GrpE (Synechococcus elongatus (strain ATCC 33912 / PCC 7942 / FACHB-805) (Anacystis nidulans R2)).